Reading from the N-terminus, the 561-residue chain is MDSIFSVFKLFSEQFKASNIQEQATSDTKPESSPDINLGCSPNIKPECSPNIKSSIDVVEDIYPSTQLATQSLVIFSQEIKQIGSPNSPGTHDVSLNLKRKSDKISEDTDQERVVVCESLENKSSSKDKSPSRGRSPKRHKSSKKHKSSKKHKSSKHDKSSKRDKSSKRHKSHKKKDKSHKKRYRSPSSDRSLSRDRSSSRDRSYKKRRLYSRDRSLSRDRSLSRDRSLSRDRSPPRDRSLSRDRSPPRNRSFSRYRSPLRDRSPTRDRSVSRDGLTPESTPFLRSVSPVRRRFNFGKVLENHLPRENLPLTSKFGDGRIYRNKFVNNIYSVVLDDGTKIWYRGEKIIHDYNPTDNTYYIIMDDGAKIWYKGNLVHRDELPAIICANGTKKWYQYNQYDRENDLPSIVGNDGTLVWYINGKISRLNDKPAHITPNGTQKWYKDGKYHRDNDMPAIVEPYVVYKWYQYGLKHRDNDLPAIINVNGDLCWYQHDKLHREEGPAVICKNGKLIWYRHGEKIRQTTASTRGKNEYEYGDIISELYDRFPYILTWNSWNLRNQQNN.

2 disordered regions span residues Ile-20–Pro-42 and Gln-82–Phe-283. Residues Asp-103–Pro-131 are compositionally biased toward basic and acidic residues. Composition is skewed to basic residues over residues Arg-135 to Lys-156 and Lys-165 to Arg-185. Basic and acidic residues-rich tracts occupy residues Ser-192–Arg-203, Tyr-211–Pro-247, and Pro-259–Ser-272.

This sequence belongs to the mimivirus L41 family.

This is an uncharacterized protein from Acanthamoeba polyphaga (Amoeba).